The chain runs to 77 residues: Large ribosomal subunit protein bL31 (77 aa).

Belongs to the bacterial ribosomal protein bL31 family. Type A subfamily. As to quaternary structure, part of the 50S ribosomal subunit.

Binds the 23S rRNA. The protein is Large ribosomal subunit protein bL31 of Paramagnetospirillum magneticum (strain ATCC 700264 / AMB-1) (Magnetospirillum magneticum).